A 308-amino-acid polypeptide reads, in one-letter code: MTSTSGKPKMEKFGLQTDKSARVILFRNGDRYHVEGVHCLVHSSKFKTFDQLKLEFSKKVGLFTGNVQKVYSMDKKRIQDIKDFVDGHHYICCGAEPLNTEVIPKGIQDIFGKAEVSDQDDEPKPSKPFVSSVPPPPTPTPTSSSGTTTTSQPTLSASPSVSSAQSPKKPVVSAYKESAVHSIDKFSVQTEKAKVIMCFRNGDRYHSGERVTVHSTKFKTYDQLKEQLSKQVKLPTGPVRKLYLASSGKLVKTMEEIIDGEYYVCAGGETLNPLDFSPTLSEHVKQKKLQEQQQQASEQQKPQEQEIF.

One can recognise a Doublecortin 1 domain in the interval 21–104; the sequence is ARVILFRNGD…AEPLNTEVIP (84 aa). Residues 115 to 167 form a disordered region; it reads EVSDQDDEPKPSKPFVSSVPPPPTPTPTSSSGTTTTSQPTLSASPSVSSAQSP. Positions 141–167 are enriched in low complexity; it reads PTSSSGTTTTSQPTLSASPSVSSAQSP. The Doublecortin 2 domain maps to 194-277; it reads KVIMCFRNGD…GETLNPLDFS (84 aa). A disordered region spans residues 282–308; it reads EHVKQKKLQEQQQQASEQQKPQEQEIF. The span at 291 to 300 shows a compositional bias: low complexity; it reads EQQQQASEQQ.

Interacts with lis1.

Its subcellular location is the cytoplasm. The protein localises to the cytoskeleton. In terms of biological role, has a cytoskeleton-independent function in chemotactic signaling during development. This chain is Protein doublecortin (dcx), found in Dictyostelium discoideum (Social amoeba).